The sequence spans 331 residues: 2-oxoglutarate-dependent dioxygenase (331 aa).

The Fe2OG dioxygenase domain maps to 186 to 292 (PACPLRLLHY…RYSVVFFMDG (107 aa)). The Fe cation site is built by histidine 214, aspartate 216, and histidine 272. Position 283 (arginine 283) interacts with 2-oxoglutarate.

Belongs to the iron/ascorbate-dependent oxidoreductase family. Fe(2+) is required as a cofactor.

Its pathway is mycotoxin biosynthesis. Functionally, 2-oxoglutarate-dependent dioxygenase; part of the gene cluster that mediates the biosynthesis of the selective antifungal agent ascochitine, an o-quinone methide that plays a possible protective role against other microbial competitors in nature and is considered to be important for pathogenicity of legume-associated Didymella species. The pathway probably begins with the synthesis of a keto-aldehyde intermediate by the ascochitine non-reducing polyketide synthase pksAC from successive condensations of 4 malonyl-CoA units, presumably with a simple acetyl-CoA starter unit. Release of the keto-aldehyde intermediate is consistent with the presence of the C-terminal reductive release domain. The HR-PKS (orf7) probably makes a diketide starter unit which is passed to the non-reducing polyketide synthase pksAC for further extension, producing ascochital and ascochitine. The aldehyde dehydrogenase (orf1), the 2-oxoglutarate-dependent dioxygenase (orf3) and the dehydrogenase (orf9) are probably involved in subsequent oxidations of methyl groups to the carboxylic acid of the heterocyclic ring. The ascochitine gene cluster also includes a gene encoding a short peptide with a cupin domain (orf2) that is often found in secondary metabolite gene clusters and which function has still to be determined. This chain is 2-oxoglutarate-dependent dioxygenase, found in Didymella fabae (Leaf and pod spot disease fungus).